Here is a 422-residue protein sequence, read N- to C-terminus: C-type lectin domain family 4 member M (422 aa).

Over 1–49 (MSDSKEPRVQPLGLLEEDPTTSGIRLFPRDFQFQQTHGHKSSTGCLGHG) the chain is Cytoplasmic. An Endocytosis signal motif is present at residues 14–15 (LL). Residues 50–70 (PLVLQLLSFALLAGVLVAILV) form a helical; Signal-anchor for type II membrane protein membrane-spanning segment. Topologically, residues 71-422 (QVYKVPSSLS…KKPIACFRDE (352 aa)) are extracellular. The N-linked (GlcNAc...) asparagine glycan is linked to Asn92. 8 repeat units span residues 108–130 (KLQE…PEKS), 131–151 (KQQE…ELPE), 154–176 (QLQE…PEES), 177–199 (RLQE…PEKS), 200–222 (RLQE…PEKS), 223–245 (RLQE…PEKS), 246–268 (KLQE…PDQS), and 269–291 (KQQQ…CCRC). The segment at 108–292 (KLQEIYQELT…AFERLCCRCP (185 aa)) is 8 X approximate tandem repeats. Disulfide bonds link Cys288/Cys418, Cys291/Cys302, Cys319/Cys412, and Cys391/Cys404. Residues 297–413 (FFQGNCYFMS…CNVDNYWICK (117 aa)) enclose the C-type lectin domain. Residues Glu382, Asn384, Ser386, Glu389, Asn400, and Asp401 each contribute to the Ca(2+) site. The N-linked (GlcNAc...) asparagine glycan is linked to Asn384.

As to quaternary structure, homotetramer.

It localises to the membrane. In terms of biological role, probable pathogen-recognition receptor involved in peripheral immune surveillance in liver. May mediate the endocytosis of pathogens which are subsequently degraded in lysosomal compartments. Probably recognizes in a calcium-dependent manner high mannose N-linked oligosaccharides in a variety of pathogen antigens. Is a receptor for ICAM3, probably by binding to mannose-like carbohydrates. This Symphalangus syndactylus (Siamang) protein is C-type lectin domain family 4 member M (CLEC4M).